Here is a 514-residue protein sequence, read N- to C-terminus: Peptide chain release factor 3 (514 aa).

A tr-type G domain is found at 8 to 268 (KKRRTFAIIS…TFLEFAPEPH (261 aa)). GTP contacts are provided by residues 17–24 (SHPDAGKT), 85–89 (DTPGH), and 139–142 (NKLD).

This sequence belongs to the TRAFAC class translation factor GTPase superfamily. Classic translation factor GTPase family. PrfC subfamily.

The protein resides in the cytoplasm. Its function is as follows. Increases the formation of ribosomal termination complexes and stimulates activities of RF-1 and RF-2. It binds guanine nucleotides and has strong preference for UGA stop codons. It may interact directly with the ribosome. The stimulation of RF-1 and RF-2 is significantly reduced by GTP and GDP, but not by GMP. This is Peptide chain release factor 3 from Streptococcus pyogenes serotype M5 (strain Manfredo).